Reading from the N-terminus, the 166-residue chain is MTDENQAAPAEQAQEPVLQIQRIYVKDVSFEAPNLPDIFQQEWKPNLNFDLGTEAKQLGENLFEVTLNVSVETTLEDSGDAAFICEVKQAGVFTIGGLTDIQLTHALTSQCPNMLFPYARELVASLVNRGTFPPLNLAPVNFDALFLEHMRRVEEESAPEEQPTLN.

Belongs to the SecB family. In terms of assembly, homotetramer, a dimer of dimers. One homotetramer interacts with 1 SecA dimer.

The protein localises to the cytoplasm. Functionally, one of the proteins required for the normal export of preproteins out of the cell cytoplasm. It is a molecular chaperone that binds to a subset of precursor proteins, maintaining them in a translocation-competent state. It also specifically binds to its receptor SecA. The chain is Protein-export protein SecB from Actinobacillus succinogenes (strain ATCC 55618 / DSM 22257 / CCUG 43843 / 130Z).